A 421-amino-acid chain; its full sequence is uncharacterized protein (421 aa).

Lys-249 is subject to N6-(pyridoxal phosphate)lysine.

The protein belongs to the class-I pyridoxal-phosphate-dependent aminotransferase family. It depends on pyridoxal 5'-phosphate as a cofactor.

Its subcellular location is the cytoplasm. This is an uncharacterized protein from Schizosaccharomyces pombe (strain 972 / ATCC 24843) (Fission yeast).